Consider the following 513-residue polypeptide: Cobyric acid synthase (513 aa).

Positions 252–457 (KIDIAVIRLP…LHGIFDEEGI (206 aa)) constitute a GATase cobBQ-type domain. Residue Cys333 is the Nucleophile of the active site. The active site involves His449.

It belongs to the CobB/CobQ family. CobQ subfamily.

It functions in the pathway cofactor biosynthesis; adenosylcobalamin biosynthesis. Functionally, catalyzes amidations at positions B, D, E, and G on adenosylcobyrinic A,C-diamide. NH(2) groups are provided by glutamine, and one molecule of ATP is hydrogenolyzed for each amidation. This chain is Cobyric acid synthase, found in Lachnoclostridium phytofermentans (strain ATCC 700394 / DSM 18823 / ISDg) (Clostridium phytofermentans).